The chain runs to 727 residues: MMTNGVVHANLFGIKDWVTPYKIAVLVLLNEMGRTGEGAVSLVERRKLNQLLLPLLQGPDITLSKLYKLIEESCPQLANSVQIRIKLMAEGELKDLEQFFDDLSDSFSGTEPEVHKTSVVGLFLRHMILAYSKLSFSQVFKLYTALQQYFQNGEKKTVEDADMDREDGERQMEKEELDVSVREEEVSCSGPLSQKQAEFFLSQQAALLKNDETKALTPASLQKELNNLLKFNPDFAEAHYLSYLNNLRVQDVFSSTHSLLHYFDRLILTGAEGKSNGEEGYGRSLRYAALNLAALHCRFGHYQQAELALQEAIRIAQESNDHVCLQHCLSWLYVLGQKRADSYVLLEHSVKKAVHFGLPRAFAGKTANKLMDALKDSDLLHWKHSLSELIDISIAQKTAIWRLYGRSTMALQQAQMLLSMNSLESLSAGVQQNNTESFAVALCHLAELHAEQGCFAAAGEVLKHLKERFPPNSQHAQLWMLCDQKIQFDRAMNDGKFHLADSLVTGITALNGIEGVYRKAVVLQAQNQMTEAHKLLQKLLTYCQKLKNTEMVISVLLSVAELYWRSSSPTIAMPVLLEALALSKEYRLQYLASETVLNLAYAQLILGIPEQALTLLHMAIEPILADGAILDKGRAMFLVSKCQVASAASYDPVKKAEALEAAIQNLTEAKNYFAKVDCRERIRDVSYFQARLYHALGKTQERNHCAMVFRQLHQELPSHGVPLINHL.

Ser180 is subject to Phosphoserine. TPR repeat units follow at residues 194–234 (QKQA…FNPD), 235–285 (FAEA…GRSL), 286–322 (RYAA…SNDH), 323–359 (VCLQ…FGLP), 360–390 (RAFA…SELI), 391–438 (DISI…TESF), 439–472 (AVAL…FPPN), 473–512 (SQHA…ALNG), 513–552 (IEGV…TEMV), 553–592 (ISVL…QYLA), 593–632 (SETV…ILDK), 633–668 (GRAM…NLTE), and 669–708 (AKNY…CAMV). The residue at position 217 (Thr217) is a Phosphothreonine.

It belongs to the APC5 family. The mammalian APC/C is composed at least of 14 distinct subunits ANAPC1, ANAPC2, CDC27/APC3, ANAPC4, ANAPC5, CDC16/APC6, ANAPC7, CDC23/APC8, ANAPC10, ANAPC11, CDC26/APC12, ANAPC13, ANAPC15 and ANAPC16 that assemble into a complex of at least 19 chains with a combined molecular mass of around 1.2 MDa; APC/C interacts with FZR1 and FBXO5.

It localises to the nucleus. The protein resides in the cytoplasm. Its subcellular location is the cytoskeleton. The protein localises to the spindle. Its pathway is protein modification; protein ubiquitination. Functionally, component of the anaphase promoting complex/cyclosome (APC/C), a cell cycle-regulated E3 ubiquitin ligase that controls progression through mitosis and the G1 phase of the cell cycle. The APC/C complex acts by mediating ubiquitination and subsequent degradation of target proteins: it mainly mediates the formation of 'Lys-11'-linked polyubiquitin chains and, to a lower extent, the formation of 'Lys-48'- and 'Lys-63'-linked polyubiquitin chains. The APC/C complex catalyzes assembly of branched 'Lys-11'-/'Lys-48'-linked branched ubiquitin chains on target proteins. In Rattus norvegicus (Rat), this protein is Anaphase-promoting complex subunit 5 (Anapc5).